A 158-amino-acid polypeptide reads, in one-letter code: 2-C-methyl-D-erythritol 2,4-cyclodiphosphate synthase (158 aa).

A divalent metal cation contacts are provided by aspartate 8 and histidine 10. Residues 8–10 and 34–35 contribute to the 4-CDP-2-C-methyl-D-erythritol 2-phosphate site; these read DSH and HS. A divalent metal cation is bound at residue histidine 42. 4-CDP-2-C-methyl-D-erythritol 2-phosphate is bound by residues 56-58, 61-65, and arginine 142; these read DIG and FPDND.

The protein belongs to the IspF family. As to quaternary structure, homotrimer. The cofactor is a divalent metal cation.

The catalysed reaction is 4-CDP-2-C-methyl-D-erythritol 2-phosphate = 2-C-methyl-D-erythritol 2,4-cyclic diphosphate + CMP. Its pathway is isoprenoid biosynthesis; isopentenyl diphosphate biosynthesis via DXP pathway; isopentenyl diphosphate from 1-deoxy-D-xylulose 5-phosphate: step 4/6. Functionally, involved in the biosynthesis of isopentenyl diphosphate (IPP) and dimethylallyl diphosphate (DMAPP), two major building blocks of isoprenoid compounds. Catalyzes the conversion of 4-diphosphocytidyl-2-C-methyl-D-erythritol 2-phosphate (CDP-ME2P) to 2-C-methyl-D-erythritol 2,4-cyclodiphosphate (ME-CPP) with a corresponding release of cytidine 5-monophosphate (CMP). This chain is 2-C-methyl-D-erythritol 2,4-cyclodiphosphate synthase, found in Brachyspira hyodysenteriae (strain ATCC 49526 / WA1).